The following is a 502-amino-acid chain: Galactose/methyl galactoside import ATP-binding protein MglA (502 aa).

2 consecutive ABC transporter domains span residues leucine 10–glutamate 245 and asparagine 255–leucine 502. Residue glycine 42–serine 49 coordinates ATP.

It belongs to the ABC transporter superfamily. Galactose/methyl galactoside importer (TC 3.A.1.2.3) family. As to quaternary structure, the complex is composed of one ATP-binding protein (MglA), two transmembrane proteins (MglC) and a solute-binding protein (MglB).

The protein localises to the cell inner membrane. The catalysed reaction is D-galactose(out) + ATP + H2O = D-galactose(in) + ADP + phosphate + H(+). It carries out the reaction methyl beta-D-galactoside(out) + ATP + H2O = methyl beta-D-galactoside(in) + ADP + phosphate + H(+). In terms of biological role, part of the ABC transporter complex MglABC involved in galactose/methyl galactoside import. Responsible for energy coupling to the transport system. The polypeptide is Galactose/methyl galactoside import ATP-binding protein MglA (Vibrio vulnificus (strain CMCP6)).